Consider the following 194-residue polypeptide: Imidazoleglycerol-phosphate dehydratase (194 aa).

It belongs to the imidazoleglycerol-phosphate dehydratase family.

It localises to the cytoplasm. The enzyme catalyses D-erythro-1-(imidazol-4-yl)glycerol 3-phosphate = 3-(imidazol-4-yl)-2-oxopropyl phosphate + H2O. It participates in amino-acid biosynthesis; L-histidine biosynthesis; L-histidine from 5-phospho-alpha-D-ribose 1-diphosphate: step 6/9. In Ruminiclostridium cellulolyticum (strain ATCC 35319 / DSM 5812 / JCM 6584 / H10) (Clostridium cellulolyticum), this protein is Imidazoleglycerol-phosphate dehydratase.